Here is a 238-residue protein sequence, read N- to C-terminus: Flagellar L-ring protein (238 aa).

Positions 1–16 (MNKAILAVAMVLLLAG) are cleaved as a signal peptide. A lipid anchor (N-palmitoyl cysteine) is attached at C17. C17 carries the S-diacylglycerol cysteine lipid modification.

This sequence belongs to the FlgH family. In terms of assembly, the basal body constitutes a major portion of the flagellar organelle and consists of four rings (L,P,S, and M) mounted on a central rod.

It is found in the cell outer membrane. The protein resides in the bacterial flagellum basal body. In terms of biological role, assembles around the rod to form the L-ring and probably protects the motor/basal body from shearing forces during rotation. This is Flagellar L-ring protein from Brucella abortus (strain 2308).